The sequence spans 430 residues: Tol-Pal system protein TolB (430 aa).

The N-terminal stretch at 1-21 is a signal peptide; that stretch reads MKQALRVAFGFLMLWAAMLHA.

The protein belongs to the TolB family. As to quaternary structure, the Tol-Pal system is composed of five core proteins: the inner membrane proteins TolA, TolQ and TolR, the periplasmic protein TolB and the outer membrane protein Pal. They form a network linking the inner and outer membranes and the peptidoglycan layer.

It localises to the periplasm. In terms of biological role, part of the Tol-Pal system, which plays a role in outer membrane invagination during cell division and is important for maintaining outer membrane integrity. TolB occupies a key intermediary position in the Tol-Pal system because it communicates directly with both membrane-embedded components, Pal in the outer membrane and TolA in the inner membrane. In Escherichia fergusonii (strain ATCC 35469 / DSM 13698 / CCUG 18766 / IAM 14443 / JCM 21226 / LMG 7866 / NBRC 102419 / NCTC 12128 / CDC 0568-73), this protein is Tol-Pal system protein TolB.